The primary structure comprises 234 residues: Ubiquitin thioesterase OTUB2 (234 aa).

The OTU domain occupies 40–231 (TAIRKTKGDG…TSHYNILYAA (192 aa)). Residue Asp-48 is part of the active site. The Nucleophile role is filled by Cys-51. Residue His-224 is part of the active site.

The protein belongs to the peptidase C65 family. As to expression, widely expressed. Expressed at higher level in brain.

The enzyme catalyses Thiol-dependent hydrolysis of ester, thioester, amide, peptide and isopeptide bonds formed by the C-terminal Gly of ubiquitin (a 76-residue protein attached to proteins as an intracellular targeting signal).. Functionally, hydrolase that can remove conjugated ubiquitin from proteins in vitro and may therefore play an important regulatory role at the level of protein turnover by preventing degradation. Mediates deubiquitination of 'Lys-11'-,'Lys-48'- and 'Lys-63'-linked polyubiquitin chains, with a preference for 'Lys-63'-linked polyubiquitin chains. This Homo sapiens (Human) protein is Ubiquitin thioesterase OTUB2 (OTUB2).